The chain runs to 514 residues: Contact site A protein (514 aa).

The first 19 residues, 1–19 (MKFLLVLIILYNILNSAHS), serve as a signal peptide directing secretion. Residues 20–453 (APTITAVSNG…EATTSTTYTI (434 aa)) form a globular region. Residues 21 to 104 (PTITAVSNGK…TGGNGLFKYT (84 aa)) form the IPT/TIG 1 domain. N128, N137, N207, N294, and N399 each carry an N-linked (GlcNAc...) asparagine glycan. The IPT/TIG 2 domain occupies 191-283 (PTITSITPLA…NQQPITFTYN (93 aa)). Low complexity-rich tracts occupy residues 446–475 (TTST…TATP) and 483–494 (STPEETEAPSSA). A disordered region spans residues 446 to 494 (TTSTTYTIPDTPTPTDTATPSPTPTETATPSPTPKPTSTPEETEAPSSA). Repeat copies occupy residues 462–469 (TATPSPTP) and 472–479 (TATPSPTP). A 2 X 8 AA repeats, Pro-rich region spans residues 462–479 (TATPSPTPTETATPSPTP). A lipid anchor (GPI-like-anchor amidated serine) is attached at S492. A propeptide spans 493–514 (SATTLISPLSLIVIFISFVLLI) (removed in mature form).

In terms of processing, phosphorylated on serine and N-glycosylated with two types of oligosaccharide chains. The GPI-like-anchor contains a phosphoceramide group, rather than a phosphatidyl group.

Its subcellular location is the cell membrane. This cell-surface glycoprotein mediates cell-cell binding via homophilic interaction. In Dictyostelium discoideum (Social amoeba), this protein is Contact site A protein (csaA).